A 404-amino-acid polypeptide reads, in one-letter code: Subtilisin-like protease 3 (404 aa).

Residues 1–20 (MLFSKSLVALVACFLPLIVS) form the signal peptide. Residues 21–114 (ATELKLRNAA…VDKDVKVSAY (94 aa)) constitute a propeptide that is removed on maturation. In terms of domain architecture, Inhibitor I9 spans 38–112 (SYIVVYKDID…AYVDKDVKVS (75 aa)). Residues 123–404 (PWGLDRISHR…DNLAYNDDGY (282 aa)) enclose the Peptidase S8 domain. Asparagine 133 carries an N-linked (GlcNAc...) asparagine glycan. Residues aspartate 158 and histidine 190 each act as charge relay system in the active site. N-linked (GlcNAc...) asparagine glycans are attached at residues asparagine 243, asparagine 251, asparagine 286, asparagine 307, and asparagine 340. The Charge relay system role is filled by serine 347. Asparagine 366 carries an N-linked (GlcNAc...) asparagine glycan.

This sequence belongs to the peptidase S8 family.

The protein resides in the secreted. Functionally, secreted subtilisin-like serine endopeptidase. Mediates the degradation of collagen, the major structural protein in the mammalian host. Degrades the nonhelical regions of collagen that function in the cross-linking of the helical components. May function as virulence factor involved in epidermal wing necrosis observed in white nose syndrome (WNS) in bats. The protein is Subtilisin-like protease 3 of Pseudogymnoascus destructans (strain ATCC MYA-4855 / 20631-21) (Bat white-nose syndrome fungus).